The primary structure comprises 554 residues: DNA ligase B (554 aa).

K122 serves as the catalytic N6-AMP-lysine intermediate.

Belongs to the NAD-dependent DNA ligase family. LigB subfamily.

It carries out the reaction NAD(+) + (deoxyribonucleotide)n-3'-hydroxyl + 5'-phospho-(deoxyribonucleotide)m = (deoxyribonucleotide)n+m + AMP + beta-nicotinamide D-nucleotide.. Its function is as follows. Catalyzes the formation of phosphodiester linkages between 5'-phosphoryl and 3'-hydroxyl groups in double-stranded DNA using NAD as a coenzyme and as the energy source for the reaction. This chain is DNA ligase B, found in Pseudomonas fluorescens (strain SBW25).